Here is a 278-residue protein sequence, read N- to C-terminus: Tryptophan synthase alpha chain (278 aa).

Residues E49 and D60 each act as proton acceptor in the active site.

This sequence belongs to the TrpA family. In terms of assembly, tetramer of two alpha and two beta chains.

The catalysed reaction is (1S,2R)-1-C-(indol-3-yl)glycerol 3-phosphate + L-serine = D-glyceraldehyde 3-phosphate + L-tryptophan + H2O. The protein operates within amino-acid biosynthesis; L-tryptophan biosynthesis; L-tryptophan from chorismate: step 5/5. In terms of biological role, the alpha subunit is responsible for the aldol cleavage of indoleglycerol phosphate to indole and glyceraldehyde 3-phosphate. This is Tryptophan synthase alpha chain from Rhodopirellula baltica (strain DSM 10527 / NCIMB 13988 / SH1).